The following is a 397-amino-acid chain: FAD-dependent monooxygenase trt8 (397 aa).

Residue Tyr53 is part of the active site. FAD-binding residues include Asp145 and Ala158.

Belongs to the paxM FAD-dependent monooxygenase family. The cofactor is FAD.

The protein operates within secondary metabolite biosynthesis; terpenoid biosynthesis. In terms of biological role, FAD-dependent monooxygenase; part of the gene cluster that mediates the biosynthesis of terretonin, a fungal meroterpenoid that acts as a mycotoxin. The first step of the pathway is the synthesis of 3,5-dimethylorsellinic acid (DMOA) by the polyketide synthase trt4. DMOA is then prenylated into farnesyl-DMOA by the polyprenyl transferase trt2. Methylation by the methyltransferase trt5 then leads to farnesyl-DMOA methyl ester which is further subject to epoxidation by the FAD-dependent monooxygenase trt8 to yield epoxyfarnesyl-DMOA methyl ester. Cyclization of epoxyfarnesyl-DMOA methyl ester by the terpene cyclase trt1 leads to a tetracycle intermediate which is in turn converted to preterretonin. Dehydrogenase trt9 comes next to transform preterretonin to preterrenoid. The FAD-dependent monooxygenase trt3 is then required for the C-hydroxylation at C16 of preterrenoid to yield terrenoid. The cytochrome P450 trt6 catalyzes three successive oxidations to transform terrenoid into an unstable intermediate, which then undergoes the D-ring expansion and unusual rearrangement of the methoxy group to afford the core skeleton of terretonin. Trt14 catalyzes the D-ring expansion of terretonin involving intramolecular methoxy rearrangement as well as the hydrolysis of the expanded D-ring and the methyl ester moiety. Finally, the nonheme iron-dependent dioxygenase trt7 accomplishes the last two oxidation reactions steps to complete the biosynthesis of terretonin. Terretonin C is produced via spontaneous decarboxylation of the terretonin precursor. Another shunt product of the terretonin biosynthesis is dihydrofarnesyl-DMOA, derived from epoxyfarnesyl-DMOA through hydrolysis of the epoxide. This is FAD-dependent monooxygenase trt8 from Aspergillus terreus (strain NIH 2624 / FGSC A1156).